The primary structure comprises 448 residues: DNA repair protein RadA (448 aa).

The C4-type zinc finger occupies 10 to 27 (CQHCGFTSPKWLGKCVQC). 96–103 (GSPGVGKS) lines the ATP pocket. The short motif at 253–257 (KNRFG) is the RadA KNRFG motif element. The interval 351-448 (DVFINVSGGI…NVVGKIVEWM (98 aa)) is lon-protease-like.

It belongs to the RecA family. RadA subfamily.

DNA-dependent ATPase involved in processing of recombination intermediates, plays a role in repairing DNA breaks. Stimulates the branch migration of RecA-mediated strand transfer reactions, allowing the 3' invading strand to extend heteroduplex DNA faster. Binds ssDNA in the presence of ADP but not other nucleotides, has ATPase activity that is stimulated by ssDNA and various branched DNA structures, but inhibited by SSB. Does not have RecA's homology-searching function. This Helicobacter pylori (strain J99 / ATCC 700824) (Campylobacter pylori J99) protein is DNA repair protein RadA.